A 1408-amino-acid chain; its full sequence is DNA-directed RNA polymerase subunit beta' (1408 aa).

Residues cysteine 70, cysteine 72, cysteine 85, and cysteine 88 each coordinate Zn(2+). Residues aspartate 460, aspartate 462, and aspartate 464 each coordinate Mg(2+). Residues cysteine 814, cysteine 887, cysteine 894, and cysteine 897 each coordinate Zn(2+).

It belongs to the RNA polymerase beta' chain family. The RNAP catalytic core consists of 2 alpha, 1 beta, 1 beta' and 1 omega subunit. When a sigma factor is associated with the core the holoenzyme is formed, which can initiate transcription. Requires Mg(2+) as cofactor. It depends on Zn(2+) as a cofactor.

The catalysed reaction is RNA(n) + a ribonucleoside 5'-triphosphate = RNA(n+1) + diphosphate. In terms of biological role, DNA-dependent RNA polymerase catalyzes the transcription of DNA into RNA using the four ribonucleoside triphosphates as substrates. The chain is DNA-directed RNA polymerase subunit beta' from Hydrogenovibrio crunogenus (strain DSM 25203 / XCL-2) (Thiomicrospira crunogena).